We begin with the raw amino-acid sequence, 504 residues long: Aspartyl/glutamyl-tRNA(Asn/Gln) amidotransferase subunit B (504 aa).

The protein belongs to the GatB/GatE family. GatB subfamily. As to quaternary structure, heterotrimer of A, B and C subunits.

The catalysed reaction is L-glutamyl-tRNA(Gln) + L-glutamine + ATP + H2O = L-glutaminyl-tRNA(Gln) + L-glutamate + ADP + phosphate + H(+). It carries out the reaction L-aspartyl-tRNA(Asn) + L-glutamine + ATP + H2O = L-asparaginyl-tRNA(Asn) + L-glutamate + ADP + phosphate + 2 H(+). Allows the formation of correctly charged Asn-tRNA(Asn) or Gln-tRNA(Gln) through the transamidation of misacylated Asp-tRNA(Asn) or Glu-tRNA(Gln) in organisms which lack either or both of asparaginyl-tRNA or glutaminyl-tRNA synthetases. The reaction takes place in the presence of glutamine and ATP through an activated phospho-Asp-tRNA(Asn) or phospho-Glu-tRNA(Gln). The chain is Aspartyl/glutamyl-tRNA(Asn/Gln) amidotransferase subunit B from Tropheryma whipplei (strain TW08/27) (Whipple's bacillus).